The following is a 213-amino-acid chain: Orotate phosphoribosyltransferase (213 aa).

A 5-phospho-alpha-D-ribose 1-diphosphate-binding site is contributed by Lys26. Residue 34-35 (FF) participates in orotate binding. Residues 72–73 (YK), Arg99, Lys100, Lys103, His105, and 124–132 (DDVITAGTA) contribute to the 5-phospho-alpha-D-ribose 1-diphosphate site. Residues Thr128 and Arg156 each contribute to the orotate site.

It belongs to the purine/pyrimidine phosphoribosyltransferase family. PyrE subfamily. In terms of assembly, homodimer. Mg(2+) is required as a cofactor.

The catalysed reaction is orotidine 5'-phosphate + diphosphate = orotate + 5-phospho-alpha-D-ribose 1-diphosphate. Its pathway is pyrimidine metabolism; UMP biosynthesis via de novo pathway; UMP from orotate: step 1/2. Catalyzes the transfer of a ribosyl phosphate group from 5-phosphoribose 1-diphosphate to orotate, leading to the formation of orotidine monophosphate (OMP). This chain is Orotate phosphoribosyltransferase, found in Edwardsiella ictaluri (strain 93-146).